A 342-amino-acid chain; its full sequence is Protein-glutamate methylesterase/protein-glutamine glutaminase 3 (342 aa).

The region spanning 3–120 is the Response regulatory domain; it reads RVLVVEDMPT…SPGFADDARR (118 aa). 4-aspartylphosphate is present on D54. In terms of domain architecture, CheB-type methylesterase spans 152–342; that stretch reads DVPRGRVVAV…ADRLALWLRR (191 aa). Catalysis depends on residues S164, H191, and D285.

Belongs to the CheB family. In terms of processing, phosphorylated by CheA. Phosphorylation of the N-terminal regulatory domain activates the methylesterase activity.

The protein resides in the cytoplasm. It carries out the reaction [protein]-L-glutamate 5-O-methyl ester + H2O = L-glutamyl-[protein] + methanol + H(+). The enzyme catalyses L-glutaminyl-[protein] + H2O = L-glutamyl-[protein] + NH4(+). Functionally, involved in chemotaxis. Part of a chemotaxis signal transduction system that modulates chemotaxis in response to various stimuli. Catalyzes the demethylation of specific methylglutamate residues introduced into the chemoreceptors (methyl-accepting chemotaxis proteins or MCP) by CheR. Also mediates the irreversible deamidation of specific glutamine residues to glutamic acid. This chain is Protein-glutamate methylesterase/protein-glutamine glutaminase 3, found in Anaeromyxobacter dehalogenans (strain 2CP-C).